We begin with the raw amino-acid sequence, 297 residues long: Oxidoreductase R1 (297 aa).

This sequence belongs to the asaB hydroxylase/desaturase family.

The protein operates within secondary metabolite biosynthesis. Oxidoreductase; part of the gene cluster that mediates the biosynthesis of squalestatin S1 (SQS1, also known as zaragozic acid A), a heavily oxidized fungal polyketide that offers potent cholesterol lowering activity by targeting squalene synthase (SS). SQS1 is composed of a 2,8-dioxobicyclic[3.2.1]octane-3,4,5-tricarboxyclic acid core that is connected to two lipophilic polyketide arms. These initial steps feature the priming of an unusual benzoic acid starter unit onto the highly reducing polyketide synthase pks2, followed by oxaloacetate extension and product release to generate a tricarboxylic acid containing product. The phenylalanine ammonia lyase (PAL) M7 and the acyl-CoA ligase M9 are involved in transforming phenylalanine into benzoyl-CoA. The citrate synthase-like protein R3 is involved in connecting the C-alpha-carbons of the hexaketide chain and oxaloacetate to afford the tricarboxylic acid unit. The potential hydrolytic enzymes, M8 and M10, are in close proximity to pks2 and may participate in product release. On the other side, the tetraketide arm is synthesized by a the squalestatin tetraketide synthase pks1 and enzymatically esterified to the core in the last biosynthetic step, by the acetyltransferase M4. The biosynthesis of the tetraketide must involve 3 rounds of chain extension. After the first and second rounds methyl-transfer occurs, and in all rounds of extension the ketoreductase and dehydratase are active. The enoyl reductase and C-MeT of pks1 are not active in the final round of extension. The acetyltransferase M4 appears to have a broad substrate selectivity for its acyl CoA substrate, allowing the in vitro synthesis of novel squalestatins. The biosynthesis of SQS1 requires several oxidative steps likely performed by oxidoreductases M1, R1 and R2. Finally, in support of the identification of the cluster as being responsible for SQS1 production, the cluster contains a gene encoding a putative squalene synthase (SS) R6, suggesting a likely mechanism for self-resistance. The polypeptide is Oxidoreductase R1 (Phoma sp. (strain ATCC 20986 / MF5453)).